We begin with the raw amino-acid sequence, 381 residues long: E3 ubiquitin-protein ligase KCMF1 (381 aa).

An N-acetylserine modification is found at Ser2. Phosphoserine is present on Ser2. The ZZ-type zinc-finger motif lies at 4–60 (HEGVSCDACLKGNFRGRRYKCLICYDYDLCASCYESGATTTRHTTDHPMQCILTRVD). Zn(2+)-binding residues include Cys9, Cys12, Cys24, Cys27, Cys33, Cys36, His46, and His50. A C2H2-type zinc finger spans residues 78–101 (FTCPYCGKMGYTETSLQEHVTSEH). The interval 154-193 (MFHPGRGLGGPRARRSNMHFTSSSTGGLSSSQSSYSPSNR) is disordered. Phosphoserine occurs at positions 169, 189, and 212. Low complexity predominate over residues 175–191 (SSSTGGLSSSQSSYSPS). Residues 224–257 (ASQLQQLQMQLQLERQHAQAARQQLETARNATRR) adopt a coiled-coil conformation. Low complexity predominate over residues 250-285 (TARNATRRTNTSSVTTTITQSTATTNTANTESSQQT). 2 disordered regions span residues 250-314 (TARN…SERA) and 329-348 (VREE…ADFG). The segment covering 297-314 (NDPKMSETERQSMESERA) has biased composition (basic and acidic residues). Phosphoserine occurs at positions 335 and 336.

It belongs to the KCMF1 family. Component of the SIFI complex, composed of KCMF1, UBR4 and calmodulin (CALM1, CALM2 or CALM3).

It localises to the cytoplasm. Its subcellular location is the late endosome. It is found in the lysosome. The catalysed reaction is S-ubiquitinyl-[E2 ubiquitin-conjugating enzyme]-L-cysteine + [acceptor protein]-L-lysine = [E2 ubiquitin-conjugating enzyme]-L-cysteine + N(6)-ubiquitinyl-[acceptor protein]-L-lysine.. It functions in the pathway protein modification; protein ubiquitination. In terms of biological role, E3 ubiquitin-protein ligase which accepts ubiquitin from an E2 ubiquitin-conjugating enzyme and then transfers it to targeted substrates, promoting their degradation by the proteasome. Together with UBR4, component of the N-end rule pathway: ubiquitinates proteins bearing specific N-terminal residues that are destabilizing according to the N-end rule, leading to their degradation. Does not ubiquitinate proteins that are acetylated at the N-terminus. Together with UBR4, part of a protein quality control pathway that catalyzes ubiquitination and degradation of proteins that have been oxidized in response to reactive oxygen species (ROS): recognizes proteins with an Arg-CysO3(H) degron at the N-terminus, and mediates assembly of heterotypic 'Lys-63'-/'Lys-27'-linked branched ubiquitin chains on oxidized proteins, leading to their degradation by autophagy. Catalytic component of the SIFI complex, a multiprotein complex required to inhibit the mitochondrial stress response after a specific stress event has been resolved: ubiquitinates and degrades (1) components of the HRI-mediated signaling of the integrated stress response, such as DELE1 and EIF2AK1/HRI, as well as (2) unimported mitochondrial precursors. Within the SIFI complex, UBR4 initiates ubiquitin chain that are further elongated or branched by KCMF1. The polypeptide is E3 ubiquitin-protein ligase KCMF1 (KCMF1) (Bos taurus (Bovine)).